A 452-amino-acid polypeptide reads, in one-letter code: Serine--tRNA ligase (452 aa).

Thr251–Glu253 contributes to the L-serine binding site. Arg282–Glu284 serves as a coordination point for ATP. Glu305 contacts L-serine. Residue Glu369–Ser372 participates in ATP binding. Ser404 is an L-serine binding site.

The protein belongs to the class-II aminoacyl-tRNA synthetase family. Type-1 seryl-tRNA synthetase subfamily. As to quaternary structure, homodimer. The tRNA molecule binds across the dimer.

The protein resides in the cytoplasm. It carries out the reaction tRNA(Ser) + L-serine + ATP = L-seryl-tRNA(Ser) + AMP + diphosphate + H(+). The enzyme catalyses tRNA(Sec) + L-serine + ATP = L-seryl-tRNA(Sec) + AMP + diphosphate + H(+). Its pathway is aminoacyl-tRNA biosynthesis; selenocysteinyl-tRNA(Sec) biosynthesis; L-seryl-tRNA(Sec) from L-serine and tRNA(Sec): step 1/1. In terms of biological role, catalyzes the attachment of serine to tRNA(Ser). Is also able to aminoacylate tRNA(Sec) with serine, to form the misacylated tRNA L-seryl-tRNA(Sec), which will be further converted into selenocysteinyl-tRNA(Sec). The protein is Serine--tRNA ligase of Albidiferax ferrireducens (strain ATCC BAA-621 / DSM 15236 / T118) (Rhodoferax ferrireducens).